The sequence spans 418 residues: N-acetylglucosamine-6-phosphate deacetylase (418 aa).

E154 contacts a divalent metal cation. Substrate is bound at residue 165-166 (CH). Positions 223 and 244 each coordinate a divalent metal cation. Residues 247–248 (NA), R255, and 281–284 (DGIH) each bind substrate. Residue D306 is the Proton donor/acceptor of the active site. 340–342 (TAG) contacts substrate.

It belongs to the metallo-dependent hydrolases superfamily. NagA family. Requires a divalent metal cation as cofactor.

The enzyme catalyses N-acetyl-D-glucosamine 6-phosphate + H2O = D-glucosamine 6-phosphate + acetate. The protein is N-acetylglucosamine-6-phosphate deacetylase of Caenorhabditis elegans.